The sequence spans 238 residues: UPF0173 metal-dependent hydrolase Helmi_16730 (238 aa).

Belongs to the UPF0173 family.

This chain is UPF0173 metal-dependent hydrolase Helmi_16730, found in Heliobacterium modesticaldum (strain ATCC 51547 / Ice1).